The primary structure comprises 32 residues: MSDINATRLPAWLVDCPCVGDDINRLLTRGEK.

Residues 1–10 (MSDINATRLP) constitute a propeptide that is removed on maturation. Positions 11 to 17 (AWLVDCP) form a cross-link, cyclopeptide (Ala-Pro). Positions 12-16 (WLVDC) form a cross-link, 2'-cysteinyl-6'-hydroxytryptophan sulfoxide (Trp-Cys). The propeptide occupies 18-32 (CVGDDINRLLTRGEK).

This sequence belongs to the MSDIN fungal toxin family. Post-translationally, processed by the macrocyclase-peptidase enzyme POPB to yield a toxic cyclic heptapeptide. POPB first removes 10 residues from the N-terminus. Conformational trapping of the remaining peptide forces the enzyme to release this intermediate rather than proceed to macrocyclization. The enzyme rebinds the remaining peptide in a different conformation and catalyzes macrocyclization of the N-terminal 7 residues.

Major toxin that belongs to the bicyclic heptapeptides called phallotoxins. Although structurally related to amatoxins, phallotoxins have a different mode of action, which is the stabilization of F-actin. Phallotoxins are poisonous when administered parenterally, but not orally because of poor absorption. The polypeptide is Phallacidin proprotein (Amanita pallidorosea).